Consider the following 280-residue polypeptide: Phosphatidylglycerol--prolipoprotein diacylglyceryl transferase (280 aa).

3 helical membrane-spanning segments follow: residues 21 to 41, 54 to 74, and 88 to 108; these read WYGI…ISEG, LLLW…VIFE, and IWNG…VLLI. Arg-136 serves as a coordination point for a 1,2-diacyl-sn-glycero-3-phospho-(1'-sn-glycerol). 3 helical membrane passes run 176–196, 206–226, and 236–256; these read QPTF…ILSL, GEVF…VEGM, and IIRV…ILWI.

Belongs to the Lgt family.

Its subcellular location is the cell membrane. The catalysed reaction is L-cysteinyl-[prolipoprotein] + a 1,2-diacyl-sn-glycero-3-phospho-(1'-sn-glycerol) = an S-1,2-diacyl-sn-glyceryl-L-cysteinyl-[prolipoprotein] + sn-glycerol 1-phosphate + H(+). The protein operates within protein modification; lipoprotein biosynthesis (diacylglyceryl transfer). Its function is as follows. Catalyzes the transfer of the diacylglyceryl group from phosphatidylglycerol to the sulfhydryl group of the N-terminal cysteine of a prolipoprotein, the first step in the formation of mature lipoproteins. In Lactobacillus acidophilus (strain ATCC 700396 / NCK56 / N2 / NCFM), this protein is Phosphatidylglycerol--prolipoprotein diacylglyceryl transferase.